A 608-amino-acid chain; its full sequence is MIVKMKKVLLLTLSKYKKESLEILRDFGAVHINSCNKNSDSLKKSIDDRRILMQAFSLLKEDGGVKALKSSNGNFLDIAKSIVNLGNEIKEFQDIKRSLLHERNLISVWGNFSLENIDELKESNIYIQFFKIQKSEYKNLLRDPNVNVLLIKNVKNTSYFVSVGEFEQKIEIADEFKFNFDLDYINNKLKVVDEILDQKLTQISLFNKYIDILRDEIKNYDQIVEFEQVLADMQTDXEDFSYITGFVPAESQESLKNAVLKAGFAAQFADPEENDIIPTYIKRKGIANLAAPIFNILETIPGYKERDISFIFMLFFFVFFGMIIGDAAYGVIFFLIGILLSLSFLLKGKPLTPFHGLIFYLSVSSILYGAMTGTWFGSPLILEMFPILNSFKVSYLTEKNSVQNIIFICFSIGVLQISLAHVWNFFRQVKEKPHIHSIAQIGWLMCIVGLYYLVLNLILSQSRFPMYNVVYNVIYFGVALVFVFGKQDGSNFFKCILKSFGGIIEQFLTTVSGFADIISYIRLFAVGLAGLSISASFNTMSIPLLKSSNIGLIVAGIIVILFGHVLNIMLSLLSVIVHGVRLNMLEFSNHLGQEWSGCAYRPFKKMKK.

The next 9 helical transmembrane spans lie at 308 to 325 (ISFI…MIIG), 327 to 346 (AAYG…SFLL), 356 to 376 (GLIF…GTWF), 405 to 425 (IIFI…VWNF), 438 to 458 (IAQI…LNLI), 464 to 484 (FPMY…VFVF), 495 to 515 (CILK…SGFA), 517 to 537 (IISY…SASF), and 550 to 570 (IGLI…NIML).

This sequence belongs to the V-ATPase 116 kDa subunit family.

It is found in the cell membrane. Produces ATP from ADP in the presence of a proton gradient across the membrane. The chain is V-type ATP synthase subunit I (atpI) from Borreliella burgdorferi (strain ATCC 35210 / DSM 4680 / CIP 102532 / B31) (Borrelia burgdorferi).